The sequence spans 305 residues: NAD kinase (305 aa).

Asp82 acts as the Proton acceptor in catalysis. Residues 82–83, 156–157, Arg184, Asp186, 197–202, Ala221, and Gln255 each bind NAD(+); these read DG, ND, and TAYALS.

This sequence belongs to the NAD kinase family. A divalent metal cation serves as cofactor.

It is found in the cytoplasm. It carries out the reaction NAD(+) + ATP = ADP + NADP(+) + H(+). Involved in the regulation of the intracellular balance of NAD and NADP, and is a key enzyme in the biosynthesis of NADP. Catalyzes specifically the phosphorylation on 2'-hydroxyl of the adenosine moiety of NAD to yield NADP. The protein is NAD kinase of Cupriavidus pinatubonensis (strain JMP 134 / LMG 1197) (Cupriavidus necator (strain JMP 134)).